A 383-amino-acid polypeptide reads, in one-letter code: NIPA-like protein 2 (383 aa).

N-linked (GlcNAc...) asparagine glycans are attached at residues asparagine 23 and asparagine 33. 7 helical membrane passes run 46–66, 88–108, 110–130, 144–164, 177–197, 209–229, and 243–263; these read IHLF…ISLN, VLWW…FAAY, FAPI…SAII, LLGT…APNI, LVGW…CILL, VILL…VKAV, and LTYP…VFQV. N-linked (GlcNAc...) asparagine glycosylation is present at asparagine 274. Transmembrane regions (helical) follow at residues 278–298 and 306–326; these read VVPV…IIFY and FLTV…VFLV. Residues 355-383 are disordered; that stretch reads QPDSHSLSYGTLPDGSDSTKSQSGEKKEV.

It belongs to the NIPA family.

Its subcellular location is the membrane. The polypeptide is NIPA-like protein 2 (NIPAL2) (Homo sapiens (Human)).